Consider the following 630-residue polypeptide: Chaperone protein HtpG (630 aa).

An a; substrate-binding region spans residues 1-343; sequence MAKHQFQTEA…SKDLPLNVSR (343 aa). The segment at 344-554 is b; it reads EILQSNAVMA…KEDPAFMMAQ (211 aa). Residues 555-630 are c; the sequence is IMKQMGQSGD…RLNRVIAKAI (76 aa).

The protein belongs to the heat shock protein 90 family. In terms of assembly, homodimer.

It is found in the cytoplasm. Molecular chaperone. Has ATPase activity. The sequence is that of Chaperone protein HtpG from Sulfurimonas denitrificans (strain ATCC 33889 / DSM 1251) (Thiomicrospira denitrificans (strain ATCC 33889 / DSM 1251)).